Here is a 496-residue protein sequence, read N- to C-terminus: MRSYIKVLTMCFLGLILFVPTALADNSVKRVGGSNRYGTAVQISKQMYSTASTAVIVGGSSYADAISAAPLAYQKNAPLLYTNSDKLSYETKTRLKEMQTKNVIIVGGTPAVSSNTANQIKSLGISIKRIAGSNRYDTAARVAKAMGATSKAVILNGFLYADAPAVIPYAAKNGYPILFTNKTSINSATTSVIKDKGISSTVVVGGTGSISNTVYNKLPSPTRISGSNRYELAANIVQKLNLSTSTVYVSNGFSYPDSIAGATLAAKKKQSLILTNGENLSTGARKIIGSKNMSNFMIIGNTPAVSTKVANQLKNPVVGETIFIDPGHGDQDSGAIGNGLLEKEVNLDIAKRVNTKLNASGALPVLSRSNDTFYSLQERVNKAASAQADLFLSIHANANDSSSPNGSETYYDTTYQAANSKRLAEQIQPKLAANLGTRDRGVKTAAFYVIKYSKMPSVLVETAFITNASDASKLKQAVYKDKAAQAIHDGTVSYYR.

The first 24 residues, 1-24 (MRSYIKVLTMCFLGLILFVPTALA), serve as a signal peptide directing secretion. 3 tandem repeats follow at residues 30–128 (RVGG…ISIK), 129–222 (RIAG…PSPT), and 223–318 (RISG…NPVV). A 3 X tandem repeats region spans residues 30-318 (RVGGSNRYGT…VANQLKNPVV (289 aa)). The MurNAc-LAA domain occupies 322–490 (IFIDPGHGDQ…DKAAQAIHDG (169 aa)).

The protein belongs to the N-acetylmuramoyl-L-alanine amidase 3 family.

It localises to the secreted. The protein resides in the cell wall. It carries out the reaction Hydrolyzes the link between N-acetylmuramoyl residues and L-amino acid residues in certain cell-wall glycopeptides.. Its function is as follows. Autolysins are cell wall hydrolases involved in some important biological processes such as cell separation, cell-wall turnover, competence for genetic transformation, formation of the flagella - in particular of its basal body - and sporulation. Has a high affinity for teichoic acid-endowed peptidoglycan. LytC is required for efficient swarming motility but not at the level of cell separation or flagellum biosynthesis. Rather, LytC appears to be important for proper flagellar function. The polypeptide is N-acetylmuramoyl-L-alanine amidase LytC (lytC) (Bacillus subtilis (strain 168)).